The primary structure comprises 233 residues: Large ribosomal subunit protein uL1 (233 aa).

The protein belongs to the universal ribosomal protein uL1 family. In terms of assembly, part of the 50S ribosomal subunit.

Functionally, binds directly to 23S rRNA. The L1 stalk is quite mobile in the ribosome, and is involved in E site tRNA release. Protein L1 is also a translational repressor protein, it controls the translation of the L11 operon by binding to its mRNA. This is Large ribosomal subunit protein uL1 from Campylobacter curvus (strain 525.92).